A 974-amino-acid chain; its full sequence is Hexokinase-1 (974 aa).

Residues 1-42 form a disordered region; the sequence is MGWGAPLLSRMLHGPGQAGETSPVPERQSGSENPASEDRRPL. The segment at 57–66 is mitochondrial-binding peptide (MBP); that stretch reads CQRGQAVDVE. Hexokinase domains follow at residues 72–514 and 520–962; these read PLTE…MVTA and AEQH…LITA. Residues Arg86 and 140-145 contribute to the ATP site; that span reads DLGGSS. Residues 129-263 form a hexokinase small subdomain 1 region; it reads DGSEKGDFIA…DYDANIVAVV (135 aa). Residue 140-147 participates in D-glucose 6-phosphate binding; that stretch reads DLGGSSFR. Residues Ser211, 228–229, and 264–265 contribute to the D-glucose site; these read TK and ND. Residues 264 to 503 form a hexokinase large subdomain 1 region; that stretch reads NDTVGTMMTC…SDVRFLLSES (240 aa). Asp265 and Thr288 together coordinate D-glucose 6-phosphate. D-glucose-binding positions include Asn291, Glu316, and 347 to 350; that span reads QLFE. Residue Ser393 is modified to Phosphoserine. 469 to 471 provides a ligand contact to D-glucose 6-phosphate; sequence DGS. Residue 481 to 482 participates in ATP binding; the sequence is RR. D-glucose 6-phosphate is bound by residues Ser505 and 588–592; that span reads DLGGT. The hexokinase small subdomain 2 stretch occupies residues 577–711; the sequence is DGTEHGDFLA…EFDLDVVAVV (135 aa). 588–593 contacts ATP; sequence DLGGTN. D-glucose-binding positions include 659-660, 676-677, and 712-713; these read SF, TK, and ND. A hexokinase large subdomain 2 region spans residues 712–951; that stretch reads NDTVGTMMTC…CTVSFLLSED (240 aa). D-glucose 6-phosphate is bound by residues Asp713 and Thr736. Residue Thr736 coordinates ATP. Residues 738–739, Glu764, and Glu798 contribute to the D-glucose site; that span reads SN. Residues 803 to 804, 840 to 844, and 919 to 923 each bind ATP; these read GM, TKFLS, and TLYKL. D-glucose 6-phosphate contacts are provided by residues 917-919 and Ser953; that span reads DGT.

Belongs to the hexokinase family. Monomer. Interacts with RABL2/RABL2A; binds preferentially to GTP-bound RABL2. Interacts with VDAC1. The HK1-VDAC1 complex interacts with ATF2. Interacts (via N-terminal spermatogenic cell-specific region) with PFKM isoform 2 and isoform 3 (via C-terminus). Interacts with SMAD5. In terms of processing, tyrosine-phosphorylated. As to expression, in rapidly growing tumor cells exhibiting high glucose catabolic rates, isoform HK1 is markedly elevated. Isoform HK1-SA, isoform HK1-SB and isoform HK1-SC are found only in spermatogenic cells. Isoform HK1-SC is detected in round spermatids, condensing spermatids and mature sperm where it is found in the head membranes, mitochondria of the midpiece and the fibrous sheath of the flagellum. Expressed within the principal piece and midpiece of sperm tail (at protein level).

It localises to the mitochondrion outer membrane. The protein resides in the cytoplasm. The protein localises to the cytosol. It is found in the membrane. The catalysed reaction is a D-hexose + ATP = a D-hexose 6-phosphate + ADP + H(+). It carries out the reaction D-fructose + ATP = D-fructose 6-phosphate + ADP + H(+). It catalyses the reaction D-glucose + ATP = D-glucose 6-phosphate + ADP + H(+). The enzyme catalyses D-mannose + ATP = D-mannose 6-phosphate + ADP + H(+). The catalysed reaction is D-glucosamine + ATP = D-glucosamine 6-phosphate + ADP + H(+). Its pathway is carbohydrate metabolism; hexose metabolism. It functions in the pathway carbohydrate degradation; glycolysis; D-glyceraldehyde 3-phosphate and glycerone phosphate from D-glucose: step 1/4. With respect to regulation, hexokinase is an allosteric enzyme inhibited by its product D-glucose 6-phosphate. Hexokinase activity is inhibited by N-acetyl-D-glucosamine. Catalyzes the phosphorylation of various hexoses, such as D-glucose, D-glucosamine, D-fructose, D-mannose and 2-deoxy-D-glucose, to hexose 6-phosphate (D-glucose 6-phosphate, D-glucosamine 6-phosphate, D-fructose 6-phosphate, D-mannose 6-phosphate and 2-deoxy-D-glucose 6-phosphate, respectively). Does not phosphorylate N-acetyl-D-glucosamine. Mediates the initial step of glycolysis by catalyzing phosphorylation of D-glucose to D-glucose 6-phosphate. Involved in innate immunity and inflammation by acting as a pattern recognition receptor for bacterial peptidoglycan. When released in the cytosol, N-acetyl-D-glucosamine component of bacterial peptidoglycan inhibits the hexokinase activity of HK1 and causes its dissociation from mitochondrial outer membrane, thereby activating the NLRP3 inflammasome. This Mus musculus (Mouse) protein is Hexokinase-1.